The chain runs to 388 residues: MLKVKRLEEFNTCYNSNQLEKMAFFQCREEVEKVKCFLEKNSGDQDSRSGHNEAKEVWSNADLTERMPVKSKRTSALAVDIPAPPAPFDHRIVTAKQGAVNSFYTVSKTEILGGGRFGQVHKCEETATGLKLAAKIIKTRGMKDKEEVKNEISVMNQLDHANLIQLYDAFESKNDIVLVMEYVDGGELFDRIIDESYNLTELDTILFMKQICEGIRHMHQMYILHLDLKPENILCVNRDAKQIKIIDFGLARRYKPREKLKVNFGTPEFLAPEVVNYDFVSFPTDMWSVGVIAYMLLSGLSPFLGDNDAETLNNILACRWDLEDEEFQDISEEAKEFISKLLIKEKSWRISASEALKHPWLSDHKLHSRLNAQKKKNRGSDAQDFVTK.

Residues 106-361 (VSKTEILGGG…ASEALKHPWL (256 aa)) form the Protein kinase domain. Residues 112–120 (LGGGRFGQV) and Lys-135 each bind ATP. Residue Asp-227 is the Proton acceptor of the active site.

The protein belongs to the protein kinase superfamily. CAMK Ser/Thr protein kinase family.

It catalyses the reaction L-seryl-[protein] + ATP = O-phospho-L-seryl-[protein] + ADP + H(+). The catalysed reaction is L-threonyl-[protein] + ATP = O-phospho-L-threonyl-[protein] + ADP + H(+). The protein is Myosin light chain kinase family member 4 (MYLK4) of Homo sapiens (Human).